Here is a 30-residue protein sequence, read N- to C-terminus: Cytochrome c3, 50 kDa (30 aa).

As to quaternary structure, monomer. In terms of processing, binds 4 heme groups per subunit.

It is found in the periplasm. Participates in sulfate respiration coupled with phosphorylation by transferring electrons from the enzyme dehydrogenase to ferredoxin. The polypeptide is Cytochrome c3, 50 kDa (Desulfuromonas acetoxidans (Chloropseudomonas ethylica)).